Here is a 159-residue protein sequence, read N- to C-terminus: Phosphopantetheine adenylyltransferase (159 aa).

Substrate is bound at residue serine 9. ATP is bound by residues 9–10 and histidine 17; that span reads SF. 3 residues coordinate substrate: lysine 41, leucine 73, and lysine 87. ATP contacts are provided by residues 88–90, glutamate 98, and 122–128; these read GLR and YSFLSSS.

This sequence belongs to the bacterial CoaD family. As to quaternary structure, homohexamer. Mg(2+) serves as cofactor.

Its subcellular location is the cytoplasm. It catalyses the reaction (R)-4'-phosphopantetheine + ATP + H(+) = 3'-dephospho-CoA + diphosphate. It participates in cofactor biosynthesis; coenzyme A biosynthesis; CoA from (R)-pantothenate: step 4/5. In terms of biological role, reversibly transfers an adenylyl group from ATP to 4'-phosphopantetheine, yielding dephospho-CoA (dPCoA) and pyrophosphate. The protein is Phosphopantetheine adenylyltransferase of Streptomyces griseus subsp. griseus (strain JCM 4626 / CBS 651.72 / NBRC 13350 / KCC S-0626 / ISP 5235).